The chain runs to 134 residues: MCDVVYFSTQSGNTRRFVEKLDVPAQRIPRSRNDAPLRVTRPYVLILPTYGDGDPRTAVPGPVIRFLNDPRNRALIQGVVAGGNTNFGAAFGLAGRVVAHKCEVPLLHRFELMGTPEDVAKVRACLAMEMTDVG.

This sequence belongs to the NrdI family.

Its function is as follows. Probably involved in ribonucleotide reductase function. The protein is Protein NrdI of Chromohalobacter salexigens (strain ATCC BAA-138 / DSM 3043 / CIP 106854 / NCIMB 13768 / 1H11).